Here is a 205-residue protein sequence, read N- to C-terminus: Venom allergen 5 (205 aa).

Cystine bridges form between cysteine 4–cysteine 16, cysteine 8–cysteine 104, cysteine 28–cysteine 96, and cysteine 171–cysteine 188. In terms of domain architecture, SCP spans 47–190; the sequence is VNEHNRFRQK…MQHHYLICNY (144 aa).

The protein belongs to the CRISP family. Venom allergen 5-like subfamily. As to expression, expressed by the venom gland.

The protein localises to the secreted. This Polistes fuscatus (Paper wasp) protein is Venom allergen 5.